Consider the following 305-residue polypeptide: Protoheme IX farnesyltransferase (305 aa).

The next 9 helical transmembrane spans lie at 31-51 (IQVL…KGHV), 53-73 (PLLL…ANAF), 98-118 (ILPW…FAVL), 124-144 (LFAA…YTLW), 153-173 (IVIG…AVTG), 181-201 (VLFG…AMMI), 221-241 (ATAR…LVLY), 242-262 (PLGT…LWLI), and 285-305 (SIFY…FLFA).

Belongs to the UbiA prenyltransferase family. Protoheme IX farnesyltransferase subfamily.

Its subcellular location is the cell inner membrane. It catalyses the reaction heme b + (2E,6E)-farnesyl diphosphate + H2O = Fe(II)-heme o + diphosphate. It participates in porphyrin-containing compound metabolism; heme O biosynthesis; heme O from protoheme: step 1/1. Converts heme B (protoheme IX) to heme O by substitution of the vinyl group on carbon 2 of heme B porphyrin ring with a hydroxyethyl farnesyl side group. In Gloeobacter violaceus (strain ATCC 29082 / PCC 7421), this protein is Protoheme IX farnesyltransferase.